Here is a 205-residue protein sequence, read N- to C-terminus: Ribosomal RNA small subunit methyltransferase G (205 aa).

S-adenosyl-L-methionine contacts are provided by residues Gly-73, Leu-78, 124-125, and Arg-139; that span reads VE.

This sequence belongs to the methyltransferase superfamily. RNA methyltransferase RsmG family.

The protein localises to the cytoplasm. It carries out the reaction guanosine(527) in 16S rRNA + S-adenosyl-L-methionine = N(7)-methylguanosine(527) in 16S rRNA + S-adenosyl-L-homocysteine. Specifically methylates the N7 position of guanine in position 527 of 16S rRNA. The polypeptide is Ribosomal RNA small subunit methyltransferase G (Methylobacillus flagellatus (strain ATCC 51484 / DSM 6875 / VKM B-1610 / KT)).